A 63-amino-acid polypeptide reads, in one-letter code: Juvenile hormone esterase, isoform B (63 aa).

N-linked (GlcNAc...) asparagine glycosylation is present at N20.

It belongs to the type-B carboxylesterase/lipase family. As to expression, fat body, the site of their biosynthesis, and the hemolymph where it is secreted.

The catalysed reaction is juvenile hormone I + H2O = juvenile hormone I carboxylate + methanol + H(+). It catalyses the reaction juvenile hormone III + H2O = juvenile hormone III carboxylate + methanol + H(+). Its function is as follows. JH esterase plays a crucial role in the decrease of JH activity in lepidopteran insects, by hydrolyzing the methyl ester of JH. It is also involved in the transport of JH. The chain is Juvenile hormone esterase, isoform B from Trichoplusia ni (Cabbage looper).